Consider the following 312-residue polypeptide: Ribosomal protein L11 methyltransferase (312 aa).

S-adenosyl-L-methionine contacts are provided by threonine 162, glycine 183, aspartate 205, and asparagine 248.

It belongs to the methyltransferase superfamily. PrmA family.

It is found in the cytoplasm. The catalysed reaction is L-lysyl-[protein] + 3 S-adenosyl-L-methionine = N(6),N(6),N(6)-trimethyl-L-lysyl-[protein] + 3 S-adenosyl-L-homocysteine + 3 H(+). Methylates ribosomal protein L11. This Bacillus cereus (strain G9842) protein is Ribosomal protein L11 methyltransferase.